Reading from the N-terminus, the 176-residue chain is 2-C-methyl-D-erythritol 2,4-cyclodiphosphate synthase (176 aa).

Asp-22 and His-24 together coordinate a divalent metal cation. Residues 22-24 (DVH) and 48-49 (HS) contribute to the 4-CDP-2-C-methyl-D-erythritol 2-phosphate site. A divalent metal cation is bound at residue His-56. Residues 70–72 (DIG), 146–149 (TTSE), Phe-153, and Arg-156 contribute to the 4-CDP-2-C-methyl-D-erythritol 2-phosphate site.

It belongs to the IspF family. Homotrimer. The cofactor is a divalent metal cation.

The catalysed reaction is 4-CDP-2-C-methyl-D-erythritol 2-phosphate = 2-C-methyl-D-erythritol 2,4-cyclic diphosphate + CMP. The protein operates within isoprenoid biosynthesis; isopentenyl diphosphate biosynthesis via DXP pathway; isopentenyl diphosphate from 1-deoxy-D-xylulose 5-phosphate: step 4/6. In terms of biological role, involved in the biosynthesis of isopentenyl diphosphate (IPP) and dimethylallyl diphosphate (DMAPP), two major building blocks of isoprenoid compounds. Catalyzes the conversion of 4-diphosphocytidyl-2-C-methyl-D-erythritol 2-phosphate (CDP-ME2P) to 2-C-methyl-D-erythritol 2,4-cyclodiphosphate (ME-CPP) with a corresponding release of cytidine 5-monophosphate (CMP). The polypeptide is 2-C-methyl-D-erythritol 2,4-cyclodiphosphate synthase (Xylella fastidiosa (strain 9a5c)).